The primary structure comprises 318 residues: Ribokinase (318 aa).

Substrate contacts are provided by residues 11–13, 41–45, and Glu-146; these read NTD and GKGAN. ATP is bound by residues Asn-190 and 229-234; that span reads TLGSQG. K(+) contacts are provided by Asp-256 and Thr-258. 261-262 lines the ATP pocket; it reads GD. Asp-262 contacts substrate. Residue Asp-262 is the Proton acceptor of the active site. Residues Thr-292, Arg-295, Gly-297, and Ser-301 each coordinate K(+).

It belongs to the carbohydrate kinase PfkB family. Ribokinase subfamily. In terms of assembly, homodimer. It depends on Mg(2+) as a cofactor.

It is found in the cytoplasm. The protein localises to the nucleus. The catalysed reaction is D-ribose + ATP = D-ribose 5-phosphate + ADP + H(+). It functions in the pathway carbohydrate metabolism; D-ribose degradation; D-ribose 5-phosphate from beta-D-ribopyranose: step 2/2. Its activity is regulated as follows. Activated by a monovalent cation that binds near, but not in, the active site. The most likely occupant of the site in vivo is potassium. Ion binding induces a conformational change that may alter substrate affinity. Its function is as follows. Catalyzes the phosphorylation of ribose at O-5 in a reaction requiring ATP and magnesium. The resulting D-ribose-5-phosphate can then be used either for sythesis of nucleotides, histidine, and tryptophan, or as a component of the pentose phosphate pathway. The sequence is that of Ribokinase from Schizosaccharomyces pombe (strain 972 / ATCC 24843) (Fission yeast).